We begin with the raw amino-acid sequence, 282 residues long: MTLIQAILLGIIQGLTEFLPISSTAHLRIIPALAGWEDPGAAFTAIIQIGTLGAVMLYFRRDILSIVKSVATGLWKGNPLHDGEAKMGWMIAAGTLPIVAFGLLFKHEIETTLRSLYWISGALIILALVLSLAEWKIKKRLEEGHPLKSMEDIGWKEALLIGLAQAIALIPGSSRSGTTITGGLLLNLSRETAARFSFLLSLPAVFAAGAFELYKTWDLITADPGNIMNLAVATITSGIVGYLSIAFLLNYLKSHTTSIFIAYRLAAGAGLLLLLGGGTILP.

Transmembrane regions (helical) follow at residues 1 to 21 (MTLI…FLPI), 39 to 59 (PGAA…MLYF), 85 to 105 (AKMG…GLLF), 115 to 135 (SLYW…LAEW), 153 to 173 (IGWK…IPGS), 193 to 213 (AARF…AFEL), 229 to 249 (NLAV…AFLL), and 259 to 279 (IFIA…GGGT).

This sequence belongs to the UppP family.

It localises to the cell inner membrane. The enzyme catalyses di-trans,octa-cis-undecaprenyl diphosphate + H2O = di-trans,octa-cis-undecaprenyl phosphate + phosphate + H(+). In terms of biological role, catalyzes the dephosphorylation of undecaprenyl diphosphate (UPP). Confers resistance to bacitracin. The sequence is that of Undecaprenyl-diphosphatase from Chlorobium luteolum (strain DSM 273 / BCRC 81028 / 2530) (Pelodictyon luteolum).